The chain runs to 1249 residues: Apoptotic protease-activating factor 1 (1249 aa).

In terms of domain architecture, CARD spans 1–90 (MDAKARNCLL…KDLAGLLHSG (90 aa)). An NB-ARC domain is found at 106-415 (NTSFVRTVLC…LETEEVEDIL (310 aa)). Residues 154 to 161 (GMAGCGKS) and Arg265 contribute to the ATP site. Residues 613–652 (PHTDAVYHACFSQDGQRIASCGADKTLQVFKAETGEKLLD) form a WD 1-1 repeat. Residues 655 to 694 (AHEDEVLCCAFSSDDSYIATCSVDKKVKIWDSGTGKLVHT) form a WD 1-2 repeat. The WD 1-3 repeat unit spans residues 697-738 (EHSEQVNCCHFTNKSNHLLLATGSNDSFLKLWDLNQKECRNT). Residues 741–780 (GHTNSVTHCRFSPDDELLASCSADGTLKLWDVRSANEKKS) form a WD 1-4 repeat. One copy of the WD 1-5 repeat lies at 796-837 (DVEVIVKCCSWSADGDRIIVAAKNKVLLLDIHTSGLLTEIHT). The WD 1-6 repeat unit spans residues 838-877 (GHHSTIQYCDFSPYDHLAVIALSQYCVELWNIDSRVKVAD). The stretch at 880 to 910 (GHLSWVHGVMFSPDGSSFLTASDDQTIRVWE) is one WD 1-7 repeat. Residues 910–921 (ETRKVCKNSAIV) form an interpropeller linker region. The WD 2-1 repeat unit spans residues 922 to 958 (LKQEIDVVFQENEMMVLAVDNIRGLQLIAGKTGQIDY). The stretch at 959-998 (LPEAQVSCCCLSPHLEYVAFGDEEGAIKIIELPNNRVFSS) is one WD 2-2 repeat. The WD 2-3 repeat unit spans residues 1001–1040 (GHKKAVRHIQFTADGKTLISSSEDSVIQVWNWQTEEYVFL). Residues 1042 to 1080 (AHQETVKDFRLLRDSRLLSWSFDGTVKVWNVITGRIERD) form a WD 2-4 repeat. The WD 2-5 repeat unit spans residues 1083–1122 (CHQGTVLSCAISSDATKFSSTSADKTAKIWSFELPSPLHE). The stretch at 1125–1164 (GHNSCVRCSAFSLDGILLATGDDNGEIRIWNVSDGQLLHL) is one WD 2-6 repeat. The WD 2-7 repeat unit spans residues 1176–1213 (THGGWVTDVCFSPDRKMLVSAGGYLKWWNVVTGESSQT). Residues 1214 to 1249 (FYTNGTNLKKIHVSPDFRTYVTVDNLGILYILQVLE) form a WD 2-8 repeat.

Monomer. Oligomerizes to a heptameric ring, known as the apoptosome, upon binding of cytochrome c and dATP. Oligomeric Apaf-1 and pro-caspase-9 bind to each other via their respective NH2-terminal CARD domains. Interacts with UACA. Interacts with APIP. Interacts (via CARD and NACHT domains) with NAIP/BIRC1 (via NACHT domain). Interacts with CIAO2A.

Its subcellular location is the cytoplasm. Regulates programmed cell death; necessary for normal brain development. Participates with pro-caspase-9 (Apaf-3) in the cytochrome c-dependent activation of caspase-3, leading to apoptosis. This activation requires ATP. The polypeptide is Apoptotic protease-activating factor 1 (Apaf1) (Rattus norvegicus (Rat)).